Here is a 240-residue protein sequence, read N- to C-terminus: Protein FAM246C (240 aa).

Disordered regions lie at residues 1–117 (MAEP…WRSA) and 161–240 (LPAA…TRAA). 2 stretches are compositionally biased toward basic and acidic residues: residues 19 to 31 (EVLR…RRDP) and 60 to 74 (AASR…KLVE). Positions 165–175 (SPAPSPAPRPA) are enriched in pro residues. Residues 176 to 187 (ARPCRGRSAPLA) are compositionally biased toward low complexity.

This sequence belongs to the FAM246 family.

This Homo sapiens (Human) protein is Protein FAM246C.